The chain runs to 159 residues: Phosphopantetheine adenylyltransferase (159 aa).

Serine 8 lines the substrate pocket. Residues 8–9 and histidine 16 contribute to the ATP site; that span reads SF. Substrate-binding residues include lysine 40, threonine 72, and arginine 86. ATP is bound by residues 87–89, glutamate 97, and 122–128; these read GLR and YSFLSSS.

This sequence belongs to the bacterial CoaD family. As to quaternary structure, homohexamer. The cofactor is Mg(2+).

It is found in the cytoplasm. It catalyses the reaction (R)-4'-phosphopantetheine + ATP + H(+) = 3'-dephospho-CoA + diphosphate. Its pathway is cofactor biosynthesis; coenzyme A biosynthesis; CoA from (R)-pantothenate: step 4/5. Functionally, reversibly transfers an adenylyl group from ATP to 4'-phosphopantetheine, yielding dephospho-CoA (dPCoA) and pyrophosphate. This Synechocystis sp. (strain ATCC 27184 / PCC 6803 / Kazusa) protein is Phosphopantetheine adenylyltransferase.